The primary structure comprises 38 residues: Large ribosomal subunit protein bL36 (38 aa).

Belongs to the bacterial ribosomal protein bL36 family.

The protein is Large ribosomal subunit protein bL36 of Lacticaseibacillus casei (strain BL23) (Lactobacillus casei).